We begin with the raw amino-acid sequence, 372 residues long: DNA double-strand break repair protein Mre11 (372 aa).

4 residues coordinate Mn(2+): D8, H10, D49, and N84. The active-site Proton donor is the H85. Mn(2+) is bound by residues H161, H190, and H192.

It belongs to the MRE11/RAD32 family. As to quaternary structure, homodimer. Forms a heterotetramer composed of two Mre11 subunits and two Rad50 subunits. Requires Mn(2+) as cofactor.

Nuclease activity is regulated by Rad50. Functionally, part of the Rad50/Mre11 complex, which is involved in the early steps of DNA double-strand break (DSB) repair. The complex may facilitate opening of the processed DNA ends to aid in the recruitment of HerA and NurA. Mre11 binds to DSB ends and has both double-stranded 3'-5' exonuclease activity and single-stranded endonuclease activity. This chain is DNA double-strand break repair protein Mre11, found in Methanococcus maripaludis (strain DSM 14266 / JCM 13030 / NBRC 101832 / S2 / LL).